We begin with the raw amino-acid sequence, 74 residues long: MARPFFRRRKTCPFSAKDAPVIDYKDVRLLQGYLSERGKIVPSRITAVSTKKQRELAKAIKRARHIGLLPYIVK.

This sequence belongs to the bacterial ribosomal protein bS18 family. Part of the 30S ribosomal subunit. Forms a tight heterodimer with protein bS6.

Binds as a heterodimer with protein bS6 to the central domain of the 16S rRNA, where it helps stabilize the platform of the 30S subunit. In Sphingopyxis alaskensis (strain DSM 13593 / LMG 18877 / RB2256) (Sphingomonas alaskensis), this protein is Small ribosomal subunit protein bS18.